The chain runs to 348 residues: Neutral peroxidase (348 aa).

Positions 1–20 (MASFVARLTLALSFIALALA) are cleaved as a signal peptide. The propeptide occupies 21-67 (GYSLVQNTLSSPTHTRLNLIPTWLDSTFDSADVLSYLGFGKSSGRLS). 4 disulfide bridges follow: cysteine 71–cysteine 149, cysteine 102–cysteine 107, cysteine 156–cysteine 344, and cysteine 235–cysteine 256. Histidine 100 serves as the catalytic Proton acceptor. Ca(2+)-binding residues include aspartate 101, valine 104, glycine 106, and aspartate 108. 5 N-linked (GlcNAc...) asparagine glycosylation sites follow: asparagine 114, asparagine 118, asparagine 173, asparagine 177, and asparagine 189. Residue proline 198 participates in substrate binding. Asparagine 203 carries an N-linked (GlcNAc...) asparagine glycan. Histidine 228 is a heme b binding site. Threonine 229 lines the Ca(2+) pocket. Asparagine 247 and asparagine 261 each carry an N-linked (GlcNAc...) asparagine glycan. Positions 269, 271, and 276 each coordinate Ca(2+). Asparagine 300 carries an N-linked (GlcNAc...) asparagine glycan.

This sequence belongs to the peroxidase family. Classical plant (class III) peroxidase subfamily. It depends on Ca(2+) as a cofactor. Heme b serves as cofactor. Highly expressed in suspension cultured cells. Weak expression also found in the stems of intact plants. No expression in leaf, tuberous root and non-tuberous root.

The protein resides in the secreted. The enzyme catalyses 2 a phenolic donor + H2O2 = 2 a phenolic radical donor + 2 H2O. Its function is as follows. Removal of H(2)O(2), oxidation of toxic reductants, biosynthesis and degradation of lignin, suberization, auxin catabolism, response to environmental stresses such as wounding, pathogen attack and oxidative stress. These functions might be dependent on each isozyme/isoform in each plant tissue. Functionally, may contribute to protection against cold-induced oxidative stress. In Ipomoea batatas (Sweet potato), this protein is Neutral peroxidase.